Reading from the N-terminus, the 275-residue chain is Elongation factor Ts (275 aa).

An involved in Mg(2+) ion dislocation from EF-Tu region spans residues 76–79; that stretch reads TDFV.

Belongs to the EF-Ts family.

Its subcellular location is the cytoplasm. Functionally, associates with the EF-Tu.GDP complex and induces the exchange of GDP to GTP. It remains bound to the aminoacyl-tRNA.EF-Tu.GTP complex up to the GTP hydrolysis stage on the ribosome. The sequence is that of Elongation factor Ts from Corynebacterium glutamicum (strain R).